The chain runs to 129 residues: Glycine cleavage system H protein (129 aa).

In terms of domain architecture, Lipoyl-binding spans 24–106 (TFTVGISEHA…YGDGWLFRIK (83 aa)). Lys-65 bears the N6-lipoyllysine mark.

The protein belongs to the GcvH family. The glycine cleavage system is composed of four proteins: P, T, L and H. (R)-lipoate serves as cofactor.

In terms of biological role, the glycine cleavage system catalyzes the degradation of glycine. The H protein shuttles the methylamine group of glycine from the P protein to the T protein. The sequence is that of Glycine cleavage system H protein from Idiomarina loihiensis (strain ATCC BAA-735 / DSM 15497 / L2-TR).